The primary structure comprises 71 residues: Sodium channel neurotoxin MeuNaTxalpha-12 (71 aa).

The N-terminal stretch at 1 to 6 (MTGVES) is a signal peptide. The LCN-type CS-alpha/beta domain occupies 8 to 70 (RDAYIAQGNN…VPIRIQGKCQ (63 aa)). 4 disulfide bridges follow: Cys18/Cys69, Cys22/Cys42, Cys28/Cys52, and Cys32/Cys54. Arg71 is a propeptide (removed by a carboxypeptidase).

It belongs to the long (4 C-C) scorpion toxin superfamily. Sodium channel inhibitor family. Alpha subfamily. In terms of tissue distribution, expressed by the venom gland.

Its subcellular location is the secreted. Its function is as follows. Alpha toxins bind voltage-independently at site-3 of sodium channels (Nav) and inhibit the inactivation of the activated channels, thereby blocking neuronal transmission. This is Sodium channel neurotoxin MeuNaTxalpha-12 from Mesobuthus eupeus (Lesser Asian scorpion).